A 311-amino-acid chain; its full sequence is Malate dehydrogenase (311 aa).

NAD(+) contacts are provided by residues 7–13 (GAAGGIG) and Asp-34. Substrate contacts are provided by Arg-81 and Arg-87. NAD(+) is bound by residues Asn-94 and 117-119 (ITN). Asn-119 and Arg-153 together coordinate substrate. The Proton acceptor role is filled by His-177. Met-227 contributes to the NAD(+) binding site.

The protein belongs to the LDH/MDH superfamily. MDH type 1 family. As to quaternary structure, homodimer.

It carries out the reaction (S)-malate + NAD(+) = oxaloacetate + NADH + H(+). Functionally, catalyzes the reversible oxidation of malate to oxaloacetate. The chain is Malate dehydrogenase from Aeromonas hydrophila subsp. hydrophila (strain ATCC 7966 / DSM 30187 / BCRC 13018 / CCUG 14551 / JCM 1027 / KCTC 2358 / NCIMB 9240 / NCTC 8049).